A 314-amino-acid polypeptide reads, in one-letter code: Endolytic peptidoglycan transglycosylase RlpA (314 aa).

Positions 1 to 19 (MGWALKKVCFLGVIFLISA) are cleaved as a signal peptide. Cys-20 carries the N-palmitoyl cysteine lipid modification. The S-diacylglycerol cysteine moiety is linked to residue Cys-20. Residues 241–314 (SVSGGKFSLQ…YNQNAVLTRE (74 aa)) form the SPOR domain.

The protein belongs to the RlpA family.

The protein localises to the cell membrane. In terms of biological role, lytic transglycosylase with a strong preference for naked glycan strands that lack stem peptides. This chain is Endolytic peptidoglycan transglycosylase RlpA, found in Helicobacter pylori (strain J99 / ATCC 700824) (Campylobacter pylori J99).